Reading from the N-terminus, the 252-residue chain is Imidazole glycerol phosphate synthase subunit HisF (252 aa).

Active-site residues include aspartate 11 and aspartate 130.

Belongs to the HisA/HisF family. In terms of assembly, heterodimer of HisH and HisF.

It localises to the cytoplasm. It carries out the reaction 5-[(5-phospho-1-deoxy-D-ribulos-1-ylimino)methylamino]-1-(5-phospho-beta-D-ribosyl)imidazole-4-carboxamide + L-glutamine = D-erythro-1-(imidazol-4-yl)glycerol 3-phosphate + 5-amino-1-(5-phospho-beta-D-ribosyl)imidazole-4-carboxamide + L-glutamate + H(+). Its pathway is amino-acid biosynthesis; L-histidine biosynthesis; L-histidine from 5-phospho-alpha-D-ribose 1-diphosphate: step 5/9. IGPS catalyzes the conversion of PRFAR and glutamine to IGP, AICAR and glutamate. The HisF subunit catalyzes the cyclization activity that produces IGP and AICAR from PRFAR using the ammonia provided by the HisH subunit. This Staphylococcus epidermidis (strain ATCC 35984 / DSM 28319 / BCRC 17069 / CCUG 31568 / BM 3577 / RP62A) protein is Imidazole glycerol phosphate synthase subunit HisF.